The sequence spans 239 residues: MSEVTTNEYNEDGKLIRKIRSFVRREGRLTKGQENAMKECWPTMGIDYQKQLLDWKEVFGNDNPVVLEIGFGMGASLVEMAKNAPEKNFFGIEVHSPGVGACLSDAREAGISNLRVMCHDAVEVFEHMIPNDSLATLQLFFPDPWHKKRHHKRRIVQLEFAEMVRQKLIPNEGIFHMATDWENYAEHMIEIMNQAPGYRNIAEAGDYIPRPEERPLTKFEARGHRLGHGVWDIKFKRVS.

Residues Glu68, Glu93, Asp120, and Asp143 each contribute to the S-adenosyl-L-methionine site. Residue Asp143 is part of the active site. Residues Lys147, Asp180, and Thr217–Glu220 each bind substrate.

This sequence belongs to the class I-like SAM-binding methyltransferase superfamily. TrmB family.

The catalysed reaction is guanosine(46) in tRNA + S-adenosyl-L-methionine = N(7)-methylguanosine(46) in tRNA + S-adenosyl-L-homocysteine. The protein operates within tRNA modification; N(7)-methylguanine-tRNA biosynthesis. Catalyzes the formation of N(7)-methylguanine at position 46 (m7G46) in tRNA. This chain is tRNA (guanine-N(7)-)-methyltransferase, found in Vibrio vulnificus (strain CMCP6).